The sequence spans 362 residues: 4-hydroxy-3-methylbut-2-en-1-yl diphosphate synthase (flavodoxin) (362 aa).

[4Fe-4S] cluster is bound by residues C266, C269, C301, and E308.

This sequence belongs to the IspG family. The cofactor is [4Fe-4S] cluster.

It carries out the reaction (2E)-4-hydroxy-3-methylbut-2-enyl diphosphate + oxidized [flavodoxin] + H2O + 2 H(+) = 2-C-methyl-D-erythritol 2,4-cyclic diphosphate + reduced [flavodoxin]. Its pathway is isoprenoid biosynthesis; isopentenyl diphosphate biosynthesis via DXP pathway; isopentenyl diphosphate from 1-deoxy-D-xylulose 5-phosphate: step 5/6. Functionally, converts 2C-methyl-D-erythritol 2,4-cyclodiphosphate (ME-2,4cPP) into 1-hydroxy-2-methyl-2-(E)-butenyl 4-diphosphate. This chain is 4-hydroxy-3-methylbut-2-en-1-yl diphosphate synthase (flavodoxin), found in Malacoplasma penetrans (strain HF-2) (Mycoplasma penetrans).